The chain runs to 147 residues: Lysozyme C, tracheal isozyme (147 aa).

The signal sequence occupies residues 1-18; sequence MKALLILGLLLLSVAVQG. Residues 19 to 147 enclose the C-type lysozyme domain; the sequence is KTFKRCELAK…LTSYVKGCGV (129 aa). 4 disulfides stabilise this stretch: cysteine 24-cysteine 145, cysteine 48-cysteine 133, cysteine 83-cysteine 99, and cysteine 95-cysteine 113. Active-site residues include glutamate 53 and aspartate 71.

The protein belongs to the glycosyl hydrolase 22 family. Monomer. As to expression, trachea.

The enzyme catalyses Hydrolysis of (1-&gt;4)-beta-linkages between N-acetylmuramic acid and N-acetyl-D-glucosamine residues in a peptidoglycan and between N-acetyl-D-glucosamine residues in chitodextrins.. Lysozymes have primarily a bacteriolytic function; those in tissues and body fluids are associated with the monocyte-macrophage system and enhance the activity of immunoagents. The chain is Lysozyme C, tracheal isozyme from Bos taurus (Bovine).